A 177-amino-acid chain; its full sequence is Large ribosomal subunit protein uL6 (177 aa).

Belongs to the universal ribosomal protein uL6 family. As to quaternary structure, part of the 50S ribosomal subunit.

Functionally, this protein binds to the 23S rRNA, and is important in its secondary structure. It is located near the subunit interface in the base of the L7/L12 stalk, and near the tRNA binding site of the peptidyltransferase center. In Pseudomonas entomophila (strain L48), this protein is Large ribosomal subunit protein uL6.